Reading from the N-terminus, the 233-residue chain is Glucosamine-6-phosphate deaminase (233 aa).

Catalysis depends on aspartate 62, which acts as the Proton acceptor; for enolization step. Asparagine 128 acts as the For ring-opening step in catalysis. Histidine 130 acts as the Proton acceptor; for ring-opening step in catalysis. Glutamate 135 acts as the For ring-opening step in catalysis.

The protein belongs to the glucosamine/galactosamine-6-phosphate isomerase family. NagB subfamily.

It catalyses the reaction alpha-D-glucosamine 6-phosphate + H2O = beta-D-fructose 6-phosphate + NH4(+). The protein operates within amino-sugar metabolism; N-acetylneuraminate degradation; D-fructose 6-phosphate from N-acetylneuraminate: step 5/5. Its function is as follows. Catalyzes the reversible isomerization-deamination of glucosamine 6-phosphate (GlcN6P) to form fructose 6-phosphate (Fru6P) and ammonium ion. The protein is Glucosamine-6-phosphate deaminase of Enterococcus faecalis (strain ATCC 700802 / V583).